A 698-amino-acid chain; its full sequence is Polyribonucleotide nucleotidyltransferase (698 aa).

Aspartate 490 and aspartate 496 together coordinate Mg(2+). The KH domain maps to 557–616; it reads PKVVTMTIKPDKIRDVIGPGGKKINEIIDETGVKLDIEQDGTIFIGAVDQAMINRAREII. The S1 motif domain maps to 626 to 694; that stretch reads GQTYQATVKR…KQGRVNASHR (69 aa).

Belongs to the polyribonucleotide nucleotidyltransferase family. Mg(2+) is required as a cofactor.

It is found in the cytoplasm. The catalysed reaction is RNA(n+1) + phosphate = RNA(n) + a ribonucleoside 5'-diphosphate. Functionally, involved in mRNA degradation. Catalyzes the phosphorolysis of single-stranded polyribonucleotides processively in the 3'- to 5'-direction. In Staphylococcus aureus (strain bovine RF122 / ET3-1), this protein is Polyribonucleotide nucleotidyltransferase.